The chain runs to 541 residues: Putative ammonium transporter sll0537 (541 aa).

Transmembrane regions (helical) follow at residues 6-26 (TLWL…FMCL), 44-64 (FADF…IMFG), 86-106 (LAVF…IISG), 117-137 (YLLV…DWAW), 161-181 (FAGS…TILV), 203-223 (MPFS…FNGG), 235-255 (IMVN…LISL), 260-280 (MIQV…ITAS), 283-303 (VVMT…AYLV), 316-336 (VDAV…VGLF), and 356-376 (LLGI…FLTL).

Belongs to the ammonia transporter channel (TC 1.A.11.2) family.

Its subcellular location is the cell membrane. The polypeptide is Putative ammonium transporter sll0537 (Synechocystis sp. (strain ATCC 27184 / PCC 6803 / Kazusa)).